The chain runs to 246 residues: Probable transcriptional regulatory protein HS_0508 (246 aa).

It belongs to the TACO1 family.

The protein resides in the cytoplasm. The sequence is that of Probable transcriptional regulatory protein HS_0508 from Histophilus somni (strain 129Pt) (Haemophilus somnus).